The chain runs to 150 residues: Cytochrome c oxidase subunit 5A, mitochondrial (150 aa).

The transit peptide at 1 to 41 directs the protein to the mitochondrion; the sequence is MLGAALRRCAVAAAARAGPRGLLHSAPTPGPAAAIQSVRCY. Residues 2 to 17 carry the SIFI-degron motif; the sequence is LGAALRRCAVAAAARA. 2 positions are modified to N6-acetyllysine: lysine 87 and lysine 113. At threonine 141 the chain carries Phosphothreonine.

This sequence belongs to the cytochrome c oxidase subunit 5A family. In terms of assembly, component of the cytochrome c oxidase (complex IV, CIV), a multisubunit enzyme composed of 14 subunits. The complex is composed of a catalytic core of 3 subunits MT-CO1, MT-CO2 and MT-CO3, encoded in the mitochondrial DNA, and 11 supernumerary subunits COX4I, COX5A, COX5B, COX6A, COX6B, COX6C, COX7A, COX7B, COX7C, COX8 and NDUFA4, which are encoded in the nuclear genome. The complex exists as a monomer or a dimer and forms supercomplexes (SCs) in the inner mitochondrial membrane with NADH-ubiquinone oxidoreductase (complex I, CI) and ubiquinol-cytochrome c oxidoreductase (cytochrome b-c1 complex, complex III, CIII), resulting in different assemblies (supercomplex SCI(1)III(2)IV(1) and megacomplex MCI(2)III(2)IV(2)). Interacts with AFG1L. Interacts with RAB5IF. In terms of processing, in response to mitochondrial stress, the precursor protein is ubiquitinated by the SIFI complex in the cytoplasm before mitochondrial import, leading to its degradation. Within the SIFI complex, UBR4 initiates ubiquitin chain that are further elongated or branched by KCMF1.

The protein resides in the mitochondrion inner membrane. It participates in energy metabolism; oxidative phosphorylation. Its function is as follows. Component of the cytochrome c oxidase, the last enzyme in the mitochondrial electron transport chain which drives oxidative phosphorylation. The respiratory chain contains 3 multisubunit complexes succinate dehydrogenase (complex II, CII), ubiquinol-cytochrome c oxidoreductase (cytochrome b-c1 complex, complex III, CIII) and cytochrome c oxidase (complex IV, CIV), that cooperate to transfer electrons derived from NADH and succinate to molecular oxygen, creating an electrochemical gradient over the inner membrane that drives transmembrane transport and the ATP synthase. Cytochrome c oxidase is the component of the respiratory chain that catalyzes the reduction of oxygen to water. Electrons originating from reduced cytochrome c in the intermembrane space (IMS) are transferred via the dinuclear copper A center (CU(A)) of subunit 2 and heme A of subunit 1 to the active site in subunit 1, a binuclear center (BNC) formed by heme A3 and copper B (CU(B)). The BNC reduces molecular oxygen to 2 water molecules using 4 electrons from cytochrome c in the IMS and 4 protons from the mitochondrial matrix. The sequence is that of Cytochrome c oxidase subunit 5A, mitochondrial (COX5A) from Plecturocebus donacophilus (Bolivian gray titi monkey).